The following is a 256-amino-acid chain: Signal peptidase I (256 aa).

Catalysis depends on residues serine 32 and lysine 75.

The protein belongs to the peptidase S26 family.

It carries out the reaction Cleavage of hydrophobic, N-terminal signal or leader sequences from secreted and periplasmic proteins.. The chain is Signal peptidase I (lepB) from Aquifex aeolicus (strain VF5).